The chain runs to 272 residues: Orotidine 5'-phosphate decarboxylase (272 aa).

The active-site Proton donor is lysine 93.

This sequence belongs to the OMP decarboxylase family. Type 2 subfamily.

The catalysed reaction is orotidine 5'-phosphate + H(+) = UMP + CO2. It participates in pyrimidine metabolism; UMP biosynthesis via de novo pathway; UMP from orotate: step 2/2. The polypeptide is Orotidine 5'-phosphate decarboxylase (Roseiflexus sp. (strain RS-1)).